We begin with the raw amino-acid sequence, 124 residues long: Small ribosomal subunit protein uS12 (124 aa).

Asp89 is subject to 3-methylthioaspartic acid. The tract at residues 104–124 (ATGVKDRKQGRSKYGAKRPKE) is disordered. Over residues 113–124 (GRSKYGAKRPKE) the composition is skewed to basic residues.

This sequence belongs to the universal ribosomal protein uS12 family. In terms of assembly, part of the 30S ribosomal subunit. Contacts proteins S8 and S17. May interact with IF1 in the 30S initiation complex.

Its function is as follows. With S4 and S5 plays an important role in translational accuracy. Functionally, interacts with and stabilizes bases of the 16S rRNA that are involved in tRNA selection in the A site and with the mRNA backbone. Located at the interface of the 30S and 50S subunits, it traverses the body of the 30S subunit contacting proteins on the other side and probably holding the rRNA structure together. The combined cluster of proteins S8, S12 and S17 appears to hold together the shoulder and platform of the 30S subunit. The sequence is that of Small ribosomal subunit protein uS12 from Picosynechococcus sp. (strain ATCC 27264 / PCC 7002 / PR-6) (Agmenellum quadruplicatum).